A 147-amino-acid chain; its full sequence is Nucleoside diphosphate kinase (147 aa).

Residues Lys-11, Phe-59, Arg-87, Thr-93, Arg-104, and Asn-114 each coordinate ATP. The Pros-phosphohistidine intermediate role is filled by His-117.

This sequence belongs to the NDK family. Homotetramer. Mg(2+) is required as a cofactor.

It localises to the cytoplasm. It catalyses the reaction a 2'-deoxyribonucleoside 5'-diphosphate + ATP = a 2'-deoxyribonucleoside 5'-triphosphate + ADP. The enzyme catalyses a ribonucleoside 5'-diphosphate + ATP = a ribonucleoside 5'-triphosphate + ADP. Functionally, major role in the synthesis of nucleoside triphosphates other than ATP. The ATP gamma phosphate is transferred to the NDP beta phosphate via a ping-pong mechanism, using a phosphorylated active-site intermediate. In Anaeromyxobacter dehalogenans (strain 2CP-1 / ATCC BAA-258), this protein is Nucleoside diphosphate kinase.